We begin with the raw amino-acid sequence, 300 residues long: GTPase Era (300 aa).

Residues 8–176 (RCGYVAIVGR…EKVIADHLPE (169 aa)) form the Era-type G domain. The G1 stretch occupies residues 16 to 23 (GRPNVGKS). 16 to 23 (GRPNVGKS) lines the GTP pocket. The interval 42–46 (QTTRH) is G2. The tract at residues 63 to 66 (DTPG) is G3. GTP contacts are provided by residues 63–67 (DTPGM) and 125–128 (NKTD). The tract at residues 125–128 (NKTD) is G4. Residues 155–157 (ISA) are G5. Positions 199–283 (VREKIMRQLG…MLNLWVKVKG (85 aa)) constitute a KH type-2 domain.

This sequence belongs to the TRAFAC class TrmE-Era-EngA-EngB-Septin-like GTPase superfamily. Era GTPase family. In terms of assembly, monomer.

The protein resides in the cytoplasm. Its subcellular location is the cell inner membrane. An essential GTPase that binds both GDP and GTP, with rapid nucleotide exchange. Plays a role in 16S rRNA processing and 30S ribosomal subunit biogenesis and possibly also in cell cycle regulation and energy metabolism. The sequence is that of GTPase Era from Pseudomonas fluorescens (strain Pf0-1).